Reading from the N-terminus, the 631-residue chain is Phosphomethylpyrimidine synthase (631 aa).

Residues asparagine 239, methionine 268, tyrosine 297, histidine 333, 353–355 (SRG), 394–397 (DGLR), and glutamate 433 contribute to the substrate site. Histidine 437 contacts Zn(2+). Tyrosine 460 lines the substrate pocket. Histidine 501 contributes to the Zn(2+) binding site. Positions 581, 584, and 589 each coordinate [4Fe-4S] cluster.

The protein belongs to the ThiC family. In terms of assembly, homodimer. The cofactor is [4Fe-4S] cluster.

It carries out the reaction 5-amino-1-(5-phospho-beta-D-ribosyl)imidazole + S-adenosyl-L-methionine = 4-amino-2-methyl-5-(phosphooxymethyl)pyrimidine + CO + 5'-deoxyadenosine + formate + L-methionine + 3 H(+). It participates in cofactor biosynthesis; thiamine diphosphate biosynthesis. Its function is as follows. Catalyzes the synthesis of the hydroxymethylpyrimidine phosphate (HMP-P) moiety of thiamine from aminoimidazole ribotide (AIR) in a radical S-adenosyl-L-methionine (SAM)-dependent reaction. The protein is Phosphomethylpyrimidine synthase of Salmonella typhi.